The following is a 581-amino-acid chain: mRNA-decapping enzyme 1B (581 aa).

Serine 145 bears the Phosphoserine mark. Disordered regions lie at residues 181-222 (QISS…PEPQ) and 236-258 (APCQ…PEKF). The segment covering 204 to 219 (GSRQQRGPRPGQTSDP) has biased composition (polar residues). Residues 244–255 (PPQTLPLQQQQP) are compositionally biased toward low complexity. Serine 269 and serine 326 each carry phosphoserine. Residues 349–411 (AENRCEPGAP…HQPVTGPGEV (63 aa)) form a disordered region. Over residues 355-367 (PGAPAPASSATTP) the composition is skewed to low complexity. At threonine 366 the chain carries Phosphothreonine. Residues 368–381 (VSLAQPTRLSSALP) show a composition bias toward polar residues. The segment covering 382 to 401 (PQTPGPRALPRPAPPGPGPG) has biased composition (pro residues). Serine 412 bears the Phosphoserine mark. Residues 427–468 (QQLPAPGRPALAAKFPTATLSTRARNPLEPWRDPPPSTEQPA) form a disordered region. Serine 475 is modified (phosphoserine). The segment at 498–522 (SWAPPQERSRAPLPPGNQDPAATPT) is disordered.

It belongs to the DCP1 family. As to quaternary structure, interacts with DCP1A.

The protein resides in the cytoplasm. Its subcellular location is the nucleus. The enzyme catalyses a 5'-end (N(7)-methyl 5'-triphosphoguanosine)-ribonucleoside in mRNA + H2O = N(7)-methyl-GDP + a 5'-end phospho-ribonucleoside in mRNA + 2 H(+). Functionally, may play a role in the degradation of mRNAs, both in normal mRNA turnover and in nonsense-mediated mRNA decay. May remove the 7-methyl guanine cap structure from mRNA molecules, yielding a 5'-phosphorylated mRNA fragment and 7m-GDP. The protein is mRNA-decapping enzyme 1B (DCP1B) of Bos taurus (Bovine).